Reading from the N-terminus, the 178-residue chain is Inorganic pyrophosphatase (178 aa).

Positions 30, 44, and 56 each coordinate substrate. Mg(2+)-binding residues include Asp-66, Asp-71, and Asp-103. Tyr-140 contacts substrate.

Belongs to the PPase family. As to quaternary structure, homohexamer. The cofactor is Mg(2+).

Its subcellular location is the cytoplasm. The enzyme catalyses diphosphate + H2O = 2 phosphate + H(+). Its function is as follows. Catalyzes the hydrolysis of inorganic pyrophosphate (PPi) forming two phosphate ions. This chain is Inorganic pyrophosphatase, found in Thermococcus kodakarensis (strain ATCC BAA-918 / JCM 12380 / KOD1) (Pyrococcus kodakaraensis (strain KOD1)).